Here is a 332-residue protein sequence, read N- to C-terminus: Monoterpene synthase 25 (332 aa).

Residues D115, E180, N240, S244, and E248 each contribute to the Mg(2+) site. A DDXXXXD motif motif is present at residues 115–121 (DDPVVFD). The short motif at 240 to 248 (NDILSFYKE) is the NSE/DTE motif element.

It belongs to the trichodiene synthase family. Requires Mg(2+) as cofactor.

Terpene cyclase that catalyzes the cyclization of geranyl diphosphate (GPP) to myrcene and linalool. The protein is Monoterpene synthase 25 of Postia placenta (strain ATCC 44394 / Madison 698-R) (Brown rot fungus).